Here is a 268-residue protein sequence, read N- to C-terminus: MNPYAQLFSRLDAVNQGAFVPFVMLGDPTPELSLAIVDALVAGGADALELGIPFSDPVADGPTIQGAALRAFESHTTPDDCFELLGRIRAKYPQLPIGLLVYANLVYVRHIDGFYEKCQQAGVDSVLVADVPVQMCAPYKAAADKFGIDSIFIAPPNGDAETLKQVAELGSGYTYLVSRAGVTGAETKAGMPVDGLINTLREFNAPPALLGFGISEPAQVREAIAAGAAGAISGSAVVKIIETHHQNPEHMLTRLKEFVEGMKAATNR.

Residues Glu-49 and Asp-60 each act as proton acceptor in the active site.

This sequence belongs to the TrpA family. In terms of assembly, tetramer of two alpha and two beta chains.

It carries out the reaction (1S,2R)-1-C-(indol-3-yl)glycerol 3-phosphate + L-serine = D-glyceraldehyde 3-phosphate + L-tryptophan + H2O. The protein operates within amino-acid biosynthesis; L-tryptophan biosynthesis; L-tryptophan from chorismate: step 5/5. In terms of biological role, the alpha subunit is responsible for the aldol cleavage of indoleglycerol phosphate to indole and glyceraldehyde 3-phosphate. The polypeptide is Tryptophan synthase alpha chain (Aeromonas salmonicida (strain A449)).